Reading from the N-terminus, the 187-residue chain is RNA pyrophosphohydrolase (187 aa).

Positions 6 to 149 (GYRANVGIIL…KRQVYRLALT (144 aa)) constitute a Nudix hydrolase domain. The short motif at 38 to 59 (GGIKSGETPTQAMYRELAEETG) is the Nudix box element.

The protein belongs to the Nudix hydrolase family. RppH subfamily. The cofactor is a divalent metal cation.

Its function is as follows. Accelerates the degradation of transcripts by removing pyrophosphate from the 5'-end of triphosphorylated RNA, leading to a more labile monophosphorylated state that can stimulate subsequent ribonuclease cleavage. This Nitrosomonas eutropha (strain DSM 101675 / C91 / Nm57) protein is RNA pyrophosphohydrolase.